Consider the following 329-residue polypeptide: Probable nicotianamine synthase 4 (329 aa).

Belongs to the nicotianamine synthase (NAS)-like family.

It carries out the reaction 3 S-adenosyl-L-methionine = nicotianamine + 3 S-methyl-5'-thioadenosine + 3 H(+). In terms of biological role, synthesizes nicotianamine, a polyamine that is the first intermediate in the synthesis of the phytosiderophores of the mugineic acid type found in gramineae which serves as a sensor for the physiological iron status within the plant, and/or might be involved in the transport of iron. The sequence is that of Probable nicotianamine synthase 4 (NAS4) from Hordeum vulgare (Barley).